A 260-amino-acid chain; its full sequence is Cobalt transport protein CbiM (260 aa).

A signal peptide spans 1 to 34; the sequence is MKLGESMKKNATLSVKIIAFLGVLIFTVMPVANA. 6 helical membrane-spanning segments follow: residues 39-59, 77-97, 109-129, 132-152, 175-195, and 215-235; these read EGYLSPKWCIIWGILVLPFLI, LLFAMAGAFIFILSALKLPSF, LSTILFGPAITTVLGVIVLLF, LLLAHGGISTLGANSFAMAVM, IFFSATVGDLFTYCITAIQLG, and VFAITQIPIAIAEGILTVLIF.

Belongs to the CbiM family. In terms of assembly, forms an energy-coupling factor (ECF) transporter complex composed of an ATP-binding protein (A component, CbiO), a transmembrane protein (T component, CbiQ) and 2 possible substrate-capture proteins (S components, CbiM and CbiN) of unknown stoichimetry.

The protein resides in the cell membrane. The protein operates within cofactor biosynthesis; adenosylcobalamin biosynthesis. In terms of biological role, part of the energy-coupling factor (ECF) transporter complex CbiMNOQ involved in cobalt import. The polypeptide is Cobalt transport protein CbiM (Clostridium cellulovorans (strain ATCC 35296 / DSM 3052 / OCM 3 / 743B)).